The chain runs to 1066 residues: FHIP family protein GI14169 (1066 aa).

Residues 1–11 show a composition bias toward polar residues; that stretch reads MSWLRTSPLRQ. The segment at 1–35 is disordered; sequence MSWLRTSPLRQSLTRSGSSSGNGSSGTATTMRQRP. The segment covering 12–30 has biased composition (low complexity); the sequence is SLTRSGSSSGNGSSGTATT. Ser500 carries the post-translational modification Phosphoserine. Positions 651 to 682 are disordered; that stretch reads GIDVTTTTTASASDTDLEHNNNSSSISSGRRD. Over residues 655–678 the composition is skewed to low complexity; it reads TTTTTASASDTDLEHNNNSSSISS. Ser820 is subject to Phosphoserine. 2 disordered regions span residues 821–913 and 935–1007; these read PLHQ…GNSA and SGGE…TGNF. Residues 822 to 855 are compositionally biased toward low complexity; the sequence is LHQQLQHQQQHQQLAQTNSHTQQQQQQQQQQAQQ. The segment covering 856–874 has biased composition (polar residues); the sequence is RSTYATLSAATPVQASPTS. Residues 890–913 show a composition bias toward low complexity; the sequence is SRSITSMFSRRSTSSTPASNGNSA. The segment covering 947–971 has biased composition (polar residues); that stretch reads QDSTRGNTCETSLSTAPRQEPQTNV. Positions 972-997 are enriched in low complexity; that stretch reads GSSSNSSIGSSTQTLSGTHSSSTLHG.

This sequence belongs to the FHIP family.

This chain is FHIP family protein GI14169, found in Drosophila mojavensis (Fruit fly).